The sequence spans 258 residues: Pimeloyl-[acyl-carrier protein] methyl ester esterase (258 aa).

Substrate contacts are provided by residues Trp-22, 84–85 (SL), and 145–149 (FLAIQ). Ser-84 (nucleophile) is an active-site residue. Active-site residues include Asp-209 and His-238. His-238 provides a ligand contact to substrate.

It belongs to the AB hydrolase superfamily. Carboxylesterase BioH family. Monomer.

The protein localises to the cytoplasm. It catalyses the reaction 6-carboxyhexanoyl-[ACP] methyl ester + H2O = 6-carboxyhexanoyl-[ACP] + methanol + H(+). Its pathway is cofactor biosynthesis; biotin biosynthesis. Its function is as follows. The physiological role of BioH is to remove the methyl group introduced by BioC when the pimeloyl moiety is complete. It allows to synthesize pimeloyl-ACP via the fatty acid synthetic pathway through the hydrolysis of the ester bonds of pimeloyl-ACP esters. The protein is Pimeloyl-[acyl-carrier protein] methyl ester esterase of Pseudoalteromonas atlantica (strain T6c / ATCC BAA-1087).